Reading from the N-terminus, the 147-residue chain is Large ribosomal subunit protein bL9 (147 aa).

Belongs to the bacterial ribosomal protein bL9 family.

Its function is as follows. Binds to the 23S rRNA. The chain is Large ribosomal subunit protein bL9 from Campylobacter jejuni subsp. jejuni serotype O:6 (strain 81116 / NCTC 11828).